The chain runs to 818 residues: IQ and AAA domain-containing protein 1-like (818 aa).

Residues 206-235 (QGQAAVTIQKVWKGYLQRKRTQQDRRMEME) enclose the IQ domain. Disordered regions lie at residues 344 to 377 (QMQENRKKEQEKSKEKGKDEKEKKKGKEEKAKKG) and 458 to 482 (EERPLRAPKKTPGKKTGKKKEKDLT). Basic residues predominate over residues 463–476 (RAPKKTPGKKTGKK). 567–574 (GPSGMGKK) contacts ATP. A disordered region spans residues 795-818 (SMKHRMDQLEAEEAKLDKEKKKRK). The segment covering 798–818 (HRMDQLEAEEAKLDKEKKKRK) has biased composition (basic and acidic residues).

Belongs to the AAA ATPase family.

The protein is IQ and AAA domain-containing protein 1-like (IQCA1L) of Homo sapiens (Human).